Reading from the N-terminus, the 364-residue chain is MSGDMEAKIWGSTQISVKEFCYEWTISNFSFCMGGIRRKIKSPVFSLVANEEVAWCLRVHPNGFDEESKDYLSVYLVLVNCPKRQVRAKFEFWIKNSQGEKYQYTQSLNVPSFQRKQNWGFSKFILRDSLLSHRNWLLPKDKLTLCCKVSIVGAILNMPGQNMIPAIKDPRHMLTDDLGKLWENPLFTDCSLLVAGHEIRAHKAILAARSPVFRAMFEHQMEERLANCFEIQELDFQVFKEMMDFIYTGKAPTLHSHSMACDVLAAAEKYGLEGLKVICEDSLCRNLSVENAAHTLIVADLHSTEQLKTRALHFIAVHASEVSKSSGWKSMVESHPHLVDERFHSLASAQSVFLESSFKCLKGF.

Positions 19-149 (EFCYEWTISN…KDKLTLCCKV (131 aa)) constitute an MATH domain. The 68-residue stretch at 188–255 (TDCSLLVAGH…IYTGKAPTLH (68 aa)) folds into the BTB domain.

The protein belongs to the Tdpoz family.

In Mus musculus (Mouse), this protein is TD and POZ domain-containing protein 2.